We begin with the raw amino-acid sequence, 1496 residues long: DENN domain-containing protein 4B (1496 aa).

The MABP domain occupies 44–203 (AEPITDVAVI…AVYLCYKVGL (160 aa)). Residues 195–369 (VYLCYKVGLA…NVPFPSPQRP (175 aa)) enclose the uDENN domain. Residues 390-526 (PLPLSGASFL…PYKVLLATLT (137 aa)) enclose the cDENN domain. A dDENN domain is found at 528–644 (LYQQLDQTYT…ECSFGSARHA (117 aa)). Residues 720–744 (QPGALPVPGPSRSAPSSPAPRRTKQ) form a disordered region. Low complexity predominate over residues 729–739 (PSRSAPSSPAP). 2 PPR repeats span residues 775–811 (WFLC…VVLP) and 812–846 (DEVC…GIVP). 4 disordered regions span residues 891 to 970 (LRER…ARGA), 995 to 1055 (VPWH…TPRR), 1067 to 1119 (PSRH…GSEW), and 1205 to 1227 (SRPS…PVPG). Residues 896 to 912 (QQQQQQQQQQQQQQQEQ) show a composition bias toward low complexity. Polar residues-rich tracts occupy residues 913–924 (VSAHQEAGSSQA) and 935–944 (RPLQRQTTWA). S953 carries the phosphoserine modification. Pro residues predominate over residues 1075-1090 (RIPPPELPPDLPPPAR). A Phosphoserine modification is found at S1092. Over residues 1105-1119 (GSTASESSASLGSEW) the composition is skewed to low complexity.

The protein localises to the golgi apparatus. In terms of biological role, guanine nucleotide exchange factor (GEF) which may activate RAB10. Promotes the exchange of GDP to GTP, converting inactive GDP-bound Rab proteins into their active GTP-bound form. This is DENN domain-containing protein 4B (DENND4B) from Homo sapiens (Human).